A 159-amino-acid polypeptide reads, in one-letter code: 2-C-methyl-D-erythritol 2,4-cyclodiphosphate synthase (159 aa).

Residues D10 and H12 each contribute to the a divalent metal cation site. Residues 10–12 and 36–37 contribute to the 4-CDP-2-C-methyl-D-erythritol 2-phosphate site; these read DVH and HS. Residue H44 coordinates a divalent metal cation. 4-CDP-2-C-methyl-D-erythritol 2-phosphate-binding positions include 58–60, 63–67, 102–108, 134–137, F141, and R144; these read DIG, FPDTD, AQAPRMA, and TTSE.

Belongs to the IspF family. In terms of assembly, homotrimer. A divalent metal cation is required as a cofactor.

The enzyme catalyses 4-CDP-2-C-methyl-D-erythritol 2-phosphate = 2-C-methyl-D-erythritol 2,4-cyclic diphosphate + CMP. Its pathway is isoprenoid biosynthesis; isopentenyl diphosphate biosynthesis via DXP pathway; isopentenyl diphosphate from 1-deoxy-D-xylulose 5-phosphate: step 4/6. Involved in the biosynthesis of isopentenyl diphosphate (IPP) and dimethylallyl diphosphate (DMAPP), two major building blocks of isoprenoid compounds. Catalyzes the conversion of 4-diphosphocytidyl-2-C-methyl-D-erythritol 2-phosphate (CDP-ME2P) to 2-C-methyl-D-erythritol 2,4-cyclodiphosphate (ME-CPP) with a corresponding release of cytidine 5-monophosphate (CMP). In Cellvibrio japonicus (strain Ueda107) (Pseudomonas fluorescens subsp. cellulosa), this protein is 2-C-methyl-D-erythritol 2,4-cyclodiphosphate synthase.